An 860-amino-acid polypeptide reads, in one-letter code: Paladin (860 aa).

The segment at 1 to 24 (MGTTASAAPQATLHERLHSDSMTD) is disordered. Gly-2 carries the N-myristoyl glycine lipid modification. The span at 13 to 24 (LHERLHSDSMTD) shows a compositional bias: basic and acidic residues.

The protein belongs to the paladin family.

It localises to the cytoplasm. It is found in the cytosol. In Danio rerio (Zebrafish), this protein is Paladin (pald1).